Consider the following 315-residue polypeptide: Ribose-phosphate pyrophosphokinase (315 aa).

ATP is bound by residues 37–39 (DGE) and 96–97 (RQ). Positions 131 and 170 each coordinate Mg(2+). Lys194 is an active-site residue. Residues Arg196, Asp220, and 224-228 (DTGGT) each bind D-ribose 5-phosphate.

Belongs to the ribose-phosphate pyrophosphokinase family. Class I subfamily. In terms of assembly, homohexamer. Requires Mg(2+) as cofactor.

The protein resides in the cytoplasm. The enzyme catalyses D-ribose 5-phosphate + ATP = 5-phospho-alpha-D-ribose 1-diphosphate + AMP + H(+). The protein operates within metabolic intermediate biosynthesis; 5-phospho-alpha-D-ribose 1-diphosphate biosynthesis; 5-phospho-alpha-D-ribose 1-diphosphate from D-ribose 5-phosphate (route I): step 1/1. In terms of biological role, involved in the biosynthesis of the central metabolite phospho-alpha-D-ribosyl-1-pyrophosphate (PRPP) via the transfer of pyrophosphoryl group from ATP to 1-hydroxyl of ribose-5-phosphate (Rib-5-P). The chain is Ribose-phosphate pyrophosphokinase from Escherichia coli O6:H1 (strain CFT073 / ATCC 700928 / UPEC).